A 385-amino-acid chain; its full sequence is Leucine aminopeptidase 1 (385 aa).

Residues 1 to 14 (MKFLTLALSATATA) form the signal peptide. Positions 15–85 (MIIVNPEQQP…YGTLHTTRVV (71 aa)) are excised as a propeptide. Zn(2+) is bound by residues histidine 185, aspartate 204, glutamate 243, and aspartate 270. A disulfide bridge links cysteine 319 with cysteine 323. Histidine 352 is a binding site for Zn(2+).

Belongs to the peptidase M28 family. M28E subfamily. Monomer. It depends on Zn(2+) as a cofactor.

It localises to the secreted. Its function is as follows. Extracellular aminopeptidase that allows assimilation of proteinaceous substrates. The polypeptide is Leucine aminopeptidase 1 (lap1) (Penicillium rubens (strain ATCC 28089 / DSM 1075 / NRRL 1951 / Wisconsin 54-1255) (Penicillium chrysogenum)).